Consider the following 878-residue polypeptide: MSDLAREITPVNIEEELKSSYLDYAMSVIVGRALPDVRDGLKPVHRRVLYAMNVLGNDWNKAYKKSARVVGDVIGKYHPHGDSAVYDTIVRMAQPFSLRYMLVDGQGNFGSIDGDSAAAMRYTEIRLAKIAHELMADLEKETVDFVDNYDGTEKIPDVMPTKIPNLLVNGSSGIAVGMATNIPPHNLTEVINGCLAYIDNEDISIEGLMEHIPGPDFPTAAIINGRRGIEEAYRTGRGKVYIRARAEVEADAKTGRETIIVHEIPYQVNKARLIEKIAELVKDKRVEGISALRDESDKDGMRIVIEVKRDAVGEVVLNNLYSQTQLQVSFGINMVALHHGQPKIMNLKDIISAFVRHRREVVTRRTIFELRKARDRAHILEALAIALANIDPIIELIRRAPTPAEAKAALISRPWDLGNVAAMLERAGDDAARPEWLEPEFGVRDGQYYLTEQQAQAILDLRLQKLTGLEHEKLLDEYKELLEQIAELLHILGSADRLMEVIREEMELIRDQFGDERRTEITANSADINIEDLISQEDVVVTLSHQGYVKYQPLTDYEAQRRGGKGKSAARIKEEDFIDRLLVANTHDTILCFSSRGRLYWMKVYQLPEASRGARGRPIVNLLPLEANERITAILPVREYEEGVNVFMATASGTVKKTALTEFSRPRSAGIIAVNLNDGDELIGVDLTSGSDEVMLFSAAGKVVRFKEDAVRAMGRTATGVRGIKLAGDDKVVSLIIPRGEGAILTVTQNGYGKRTAADEYPTKSRATQGVISIKVTERNGSVVGAVQVDDCDQIMMITDAGTLVRTRVSEISVVGRNTQGVILIRTAEDENVVGLQRVAEPVDDEELDAIDGSVAEGDEDIAPEAESDDDVADDADE.

The 500-residue stretch at 34-533 (LPDVRDGLKP…NSADINIEDL (500 aa)) folds into the Topo IIA-type catalytic domain. Y122 (O-(5'-phospho-DNA)-tyrosine intermediate) is an active-site residue. Positions 560-566 (QRRGGKG) match the GyrA-box motif. Residues 844–878 (DDEELDAIDGSVAEGDEDIAPEAESDDDVADDADE) form a disordered region. The segment covering 857 to 878 (EGDEDIAPEAESDDDVADDADE) has biased composition (acidic residues).

Belongs to the type II topoisomerase GyrA/ParC subunit family. In terms of assembly, heterotetramer, composed of two GyrA and two GyrB chains. In the heterotetramer, GyrA contains the active site tyrosine that forms a transient covalent intermediate with DNA, while GyrB binds cofactors and catalyzes ATP hydrolysis.

It is found in the cytoplasm. It carries out the reaction ATP-dependent breakage, passage and rejoining of double-stranded DNA.. Functionally, a type II topoisomerase that negatively supercoils closed circular double-stranded (ds) DNA in an ATP-dependent manner to modulate DNA topology and maintain chromosomes in an underwound state, and also catalyzes the interconversion of other topological isomers of double-stranded DNA rings, including catenanes and knotted rings. Replenishes negative supercoiling downstream of highly transcribed genes to help control overall chromosomal supercoiling density. E.coli makes 15% more negative supercoils in pBR322 plasmid DNA than S.typhimurium; the S.typhimurium GyrB subunit is toxic in E.coli, while the E.coli copy can be expressed in S.typhimurium even though the 2 subunits have 777/804 residues identical. Its function is as follows. Negative supercoiling favors strand separation, and DNA replication, transcription, recombination and repair, all of which involve strand separation. Type II topoisomerases break and join 2 DNA strands simultaneously in an ATP-dependent manner. The chain is DNA gyrase subunit A from Salmonella typhimurium (strain LT2 / SGSC1412 / ATCC 700720).